The chain runs to 267 residues: MSKIFRKFAKTEFIFRFNIIDHNVILYSLYLDIIPMDSSNNYKKKYKKYKRKYIDLKKQLNYNQIHNFYFVHSTTNFSNLRDILKSGVIYPGKFLRPDQQKLSVNSEDVFANIYFEDINNLTHLQDFSILLHPKIIYDCGMFFNKGWQGGGKGDIIINATDSPVQIAHKLNEIREFLKNPILPEKIREFNPFLHHEAFFNHPISLNNGNLIGIICNHCDGSFNDYITGETHKESLKIINNIINDKLYNNVKIITRNYPIPKLNELLH.

Residues 37 to 62 (DSSNNYKKKYKKYKRKYIDLKKQLNY) adopt a coiled-coil conformation.

This is an uncharacterized protein from Acanthamoeba polyphaga (Amoeba).